A 606-amino-acid polypeptide reads, in one-letter code: MGVNAVHWFRKGLRLHDNPALKECIQGADTIRCVYILDPWFAGSSNVGINRWRFLLQCLEDLDANLRKLNSRLFVIRGQPADVFPRLFKEWNITKLSIEYDSEPFGKERDAAIKKLATEAGVEVIVRISHTLYDLDKIIELNGGQPPLTYKRFQTLVSKMEPLEMPADTITSDVIGKCMTPLSDDHDEKYGVPSLEELGFDTDGLSSAVWPGGETEALTRLERHLERKAWVANFERPRMNANSLLASPTGLSPYLRFGCLSCRLFYFKLTDLYKKVKKNSSPPLSLYGQLLWREFFYTAATNNPRFDKMEGNPICVQIPWDKNPEALAKWAEGRTGFPWIDAIMTQLRQEGWIHHLARHAVACFLTRGDLWISWEEGMKVFEELLLDADWSINAGSWMWLSCSSFFQQFFHCYCPVGFGRRTDPNGDYIRRYLPVLRGFPAKYIYDPWNAPEGIQKVAKCLIGVNYPKPMVNHAEASRLNIERMKQIYQQLSRYRGLGLLASVPSNSNGNGGLMGYAPGENVPSCSSSGNGGLMGYAPGENVPSCSGGNCSQGSGILHYAHGDSQQTHSLKQGRSSAGTGLSSGKRPSQEEDAQSVGPKVQRQSSN.

The 130-residue stretch at 3–132 (VNAVHWFRKG…EVIVRISHTL (130 aa)) folds into the Photolyase/cryptochrome alpha/beta domain. Lys-11 is covalently cross-linked (Glycyl lysine isopeptide (Lys-Gly) (interchain with G-Cter in ubiquitin)). The LIR 1 motif lies at 50 to 54 (NRWRF). Ser-71 carries the post-translational modification Phosphoserine; by AMPK. The short motif at 82-87 (DVFPRL) is the LIR 2 element. Lys-107 participates in a covalent cross-link: Glycyl lysine isopeptide (Lys-Gly) (interchain with G-Cter in ubiquitin). Positions 151–156 (KRFQTL) match the LIR 3 motif. A Glycyl lysine isopeptide (Lys-Gly) (interchain with G-Cter in ubiquitin) cross-link involves residue Lys-159. Position 247 is a phosphoserine; by MAPK (Ser-247). Ser-252 is a binding site for FAD. 2 short sequence motifs (LIR) span residues 255–260 (LRFGCL) and 271–276 (DLYKKV). Ser-280 is subject to Phosphoserine; by AMPK. An LIR 6 motif is present at residues 285–290 (SLYGQL). Gln-289 contributes to the FAD binding site. Lys-329 is covalently cross-linked (Glycyl lysine isopeptide (Lys-Gly) (interchain with G-Cter in ubiquitin)). The LIR 7 motif lies at 335-339 (TGFPW). An FAD-binding site is contributed by His-355. The segment at 371–470 (WISWEEGMKV…LIGVNYPKPM (100 aa)) is required for inhibition of CLOCK-BMAL1-mediated transcription. Residues 379-384 (KVFEEL) carry the LIR 8 motif. Residue 387 to 389 (DAD) participates in FAD binding. 3 short sequence motifs (LIR) span residues 395–400 (GSWMWL), 411–416 (HCYCPV), and 430–435 (RRYLPV). The segment at 471–493 (VNHAEASRLNIERMKQIYQQLSR) is interaction with TIMELESS. Lys-485 is covalently cross-linked (Glycyl lysine isopeptide (Lys-Gly) (interchain with G-Cter in ubiquitin)). 2 short sequence motifs (LIR) span residues 486–491 (QIYQQL) and 492–497 (SRYRGL). The interval 559–606 (YAHGDSQQTHSLKQGRSSAGTGLSSGKRPSQEEDAQSVGPKVQRQSSN) is disordered. Residues 563–586 (DSQQTHSLKQGRSSAGTGLSSGKR) show a composition bias toward polar residues. Lys-585 is covalently cross-linked (Glycyl lysine isopeptide (Lys-Gly) (interchain with G-Cter in ubiquitin)). The residue at position 588 (Ser-588) is a Phosphoserine.

It belongs to the DNA photolyase class-1 family. In terms of assembly, component of the circadian core oscillator, which includes the CRY proteins, CLOCK or NPAS2, BMAL1 or BMAL2, CSNK1D and/or CSNK1E, TIMELESS, and the PER proteins. Interacts directly with TIMELESS. Interacts directly with PER1 and PER2; interaction with PER2 inhibits its ubiquitination and vice versa. Interacts with PER3. Interacts with FBXL21. Interacts with FBXL3. Interacts with PPP5C (via TPR repeats). Interacts with CLOCK-BMAL1 independently of PER2 and DNA. Interacts with HDAC1, HDAC2 and SIN3B. Interacts with nuclear receptors AR, NR1D1, NR3C1/GR, RORA and RORC; the interaction with at least NR3C1/GR is ligand dependent. Interacts with PRKDC. Interacts with the G protein subunit alpha GNAS; the interaction may block GPCR-mediated regulation of cAMP concentrations. Interacts with PRMT5. Interacts with EZH2. Interacts with MYBBP1A, DOCK7, HNRNPU, RPL7A, RPL8 and RPS3. Interacts with MAP1LC3B. Interacts with CLOCK. Interacts with BMAL1. Interacts weakly with HDAC3; this interaction is enhanced in the presence of FBXL3. Interacts with TRIM28, KCTD5 and DDB1. Interacts with DTL. Interacts with DDB1-CUL4A complex. Interacts with FOXO1. Interacts with PSMD2 in a KDM8-dependent manner. Interacts with KDM8 in a FBXL3-dependent manner. Interacts with PPARA. Interacts with PPARG in a ligand-dependent manner. Interacts with PPARD (via domain NR LBD) in a ligand-dependent manner. Interacts with NR1I2 (via domain NR LBD) in a ligand-dependent manner. Interacts with NR1I3, VDR and HNF4A. It depends on FAD as a cofactor. Requires (6R)-5,10-methylene-5,6,7,8-tetrahydrofolate as cofactor. Phosphorylation on Ser-247 by MAPK is important for the inhibition of CLOCK-BMAL1-mediated transcriptional activity. Phosphorylation by CSNK1E requires interaction with PER1 or PER2. Phosphorylation at Ser-71 and Ser-280 by AMPK decreases protein stability. Phosphorylation at Ser-588 exhibits a robust circadian rhythm with a peak at CT8, increases protein stability, prevents SCF(FBXL3)-mediated degradation and is antagonized by interaction with PRKDC. In terms of processing, ubiquitinated by the SCF(FBXL3) and SCF(FBXL21) complexes, regulating the balance between degradation and stabilization. The SCF(FBXL3) complex is mainly nuclear and mediates ubiquitination and subsequent degradation of CRY1. In contrast, cytoplasmic SCF(FBXL21) complex-mediated ubiquitination leads to stabilize CRY1 and counteract the activity of the SCF(FBXL3) complex. The SCF(FBXL3) and SCF(FBXL21) complexes probably mediate ubiquitination at different Lys residues. Ubiquitination at Lys-11 and Lys-107 are specifically ubiquitinated by the SCF(FBXL21) complex but not by the SCF(FBXL3) complex. Ubiquitination may be inhibited by PER2. Deubiquitinated by USP7. Post-translationally, undergoes autophagy-mediated degradation in the liver in a time-dependent manner. Autophagic degradation of CRY1 (an inhibitor of gluconeogenesis) occurs during periods of reduced feeding allowing induction of gluconeogenesis and maintenance of blood glucose levels. In terms of tissue distribution, expressed in cones, amacrine cells, and retinal ganglion cells of the retina (at protein level). Expressed in all tissues examined including heart, brain, spleen, lung, liver, skeletal muscle, kidney and testis. Higher levels in brain, liver and testis. In the retina, highly expressed in the ganglion cell layer (GCL) and in the inner nuclear layer (INL). Evenly distributed in central and peripheral retina. In the brain, highly expressed in the suprachiasmatic nucleus (SCN). High levels in cerebral cortical layers particularly in the pyramidial cell layer of the hippocampus, the granular cell layer of the dentate gyrus (DG) and the pyramidal cell layer of the piriform cortex (PFC).

It localises to the cytoplasm. Its subcellular location is the nucleus. KL001 (N-[3-(9H-carbazol-9-yl)-2-hydroxypropyl]-N-(2-furanylmethyl)-methanesulfonamide) binds to CRY1 and stabilizes it by inhibiting FBXL3- and ubiquitin-dependent degradation of CRY1 resulting in lengthening of the circadian periods. KL001-mediated CRY1 stabilization can inhibit glucagon-induced gluconeogenesis in primary hepatocytes. Transcriptional repressor which forms a core component of the circadian clock. The circadian clock, an internal time-keeping system, regulates various physiological processes through the generation of approximately 24 hour circadian rhythms in gene expression, which are translated into rhythms in metabolism and behavior. It is derived from the Latin roots 'circa' (about) and 'diem' (day) and acts as an important regulator of a wide array of physiological functions including metabolism, sleep, body temperature, blood pressure, endocrine, immune, cardiovascular, and renal function. Consists of two major components: the central clock, residing in the suprachiasmatic nucleus (SCN) of the brain, and the peripheral clocks that are present in nearly every tissue and organ system. Both the central and peripheral clocks can be reset by environmental cues, also known as Zeitgebers (German for 'timegivers'). The predominant Zeitgeber for the central clock is light, which is sensed by retina and signals directly to the SCN. The central clock entrains the peripheral clocks through neuronal and hormonal signals, body temperature and feeding-related cues, aligning all clocks with the external light/dark cycle. Circadian rhythms allow an organism to achieve temporal homeostasis with its environment at the molecular level by regulating gene expression to create a peak of protein expression once every 24 hours to control when a particular physiological process is most active with respect to the solar day. Transcription and translation of core clock components (CLOCK, NPAS2, BMAL1, BMAL2, PER1, PER2, PER3, CRY1 and CRY2) plays a critical role in rhythm generation, whereas delays imposed by post-translational modifications (PTMs) are important for determining the period (tau) of the rhythms (tau refers to the period of a rhythm and is the length, in time, of one complete cycle). A diurnal rhythm is synchronized with the day/night cycle, while the ultradian and infradian rhythms have a period shorter and longer than 24 hours, respectively. Disruptions in the circadian rhythms contribute to the pathology of cardiovascular diseases, cancer, metabolic syndromes and aging. A transcription/translation feedback loop (TTFL) forms the core of the molecular circadian clock mechanism. Transcription factors, CLOCK or NPAS2 and BMAL1 or BMAL2, form the positive limb of the feedback loop, act in the form of a heterodimer and activate the transcription of core clock genes and clock-controlled genes (involved in key metabolic processes), harboring E-box elements (5'-CACGTG-3') within their promoters. The core clock genes: PER1/2/3 and CRY1/2 which are transcriptional repressors form the negative limb of the feedback loop and interact with the CLOCK|NPAS2-BMAL1|BMAL2 heterodimer inhibiting its activity and thereby negatively regulating their own expression. This heterodimer also activates nuclear receptors NR1D1/2 and RORA/B/G, which form a second feedback loop and which activate and repress BMAL1 transcription, respectively. CRY1 and CRY2 have redundant functions but also differential and selective contributions at least in defining the pace of the SCN circadian clock and its circadian transcriptional outputs. More potent transcriptional repressor in cerebellum and liver than CRY2, though more effective in lengthening the period of the SCN oscillator. On its side, CRY2 seems to play a critical role in tuning SCN circadian period by opposing the action of CRY1. With CRY2, is dispensable for circadian rhythm generation but necessary for the development of intercellular networks for rhythm synchrony. Capable of translocating circadian clock core proteins such as PER proteins to the nucleus. Interacts with CLOCK-BMAL1 independently of PER proteins and is found at CLOCK-BMAL1-bound sites, suggesting that CRY may act as a molecular gatekeeper to maintain CLOCK-BMAL1 in a poised and repressed state until the proper time for transcriptional activation. Represses the CLOCK-BMAL1 induced transcription of BHLHE40/DEC1, ATF4, MTA1, KLF10 and NAMPT. May repress circadian target genes expression in collaboration with HDAC1 and HDAC2 through histone deacetylation. Mediates the clock-control activation of ATR and modulates ATR-mediated DNA damage checkpoint. In liver, mediates circadian regulation of cAMP signaling and gluconeogenesis by binding to membrane-coupled G proteins and blocking glucagon-mediated increases in intracellular cAMP concentrations and CREB1 phosphorylation. Inhibits hepatic gluconeogenesis by decreasing nuclear FOXO1 levels that down-regulates gluconeogenic gene expression. Besides its role in the maintenance of the circadian clock, is also involved in the regulation of other processes. Represses glucocorticoid receptor NR3C1/GR-induced transcriptional activity by binding to glucocorticoid response elements (GREs). Plays a key role in glucose and lipid metabolism modulation, in part, through the transcriptional regulation of genes involved in these pathways, such as LEP or ACSL4. Represses PPARD and its target genes in the skeletal muscle and limits exercise capacity. Plays an essential role in the generation of circadian rhythms in the retina. Represses the transcriptional activity of NR1I2. The protein is Cryptochrome-1 (Cry1) of Mus musculus (Mouse).